The primary structure comprises 216 residues: Phosphatidylserine decarboxylase proenzyme (216 aa).

Catalysis depends on S183, which acts as the Schiff-base intermediate with substrate; via pyruvic acid. Pyruvic acid (Ser); by autocatalysis is present on S183.

Belongs to the phosphatidylserine decarboxylase family. PSD-A subfamily. In terms of assembly, heterodimer of a large membrane-associated beta subunit and a small pyruvoyl-containing alpha subunit. Requires pyruvate as cofactor. Post-translationally, is synthesized initially as an inactive proenzyme. Formation of the active enzyme involves a self-maturation process in which the active site pyruvoyl group is generated from an internal serine residue via an autocatalytic post-translational modification. Two non-identical subunits are generated from the proenzyme in this reaction, and the pyruvate is formed at the N-terminus of the alpha chain, which is derived from the carboxyl end of the proenzyme. The post-translation cleavage follows an unusual pathway, termed non-hydrolytic serinolysis, in which the side chain hydroxyl group of the serine supplies its oxygen atom to form the C-terminus of the beta chain, while the remainder of the serine residue undergoes an oxidative deamination to produce ammonia and the pyruvoyl prosthetic group on the alpha chain.

The protein resides in the cell membrane. The catalysed reaction is a 1,2-diacyl-sn-glycero-3-phospho-L-serine + H(+) = a 1,2-diacyl-sn-glycero-3-phosphoethanolamine + CO2. The protein operates within phospholipid metabolism; phosphatidylethanolamine biosynthesis; phosphatidylethanolamine from CDP-diacylglycerol: step 2/2. Catalyzes the formation of phosphatidylethanolamine (PtdEtn) from phosphatidylserine (PtdSer). The chain is Phosphatidylserine decarboxylase proenzyme from Chlorobaculum tepidum (strain ATCC 49652 / DSM 12025 / NBRC 103806 / TLS) (Chlorobium tepidum).